The primary structure comprises 144 residues: 3-dehydroquinate dehydratase (144 aa).

Residue Tyr-22 is the Proton acceptor of the active site. Substrate is bound by residues Asn-71, His-77, and Asp-84. The active-site Proton donor is the His-97. Substrate contacts are provided by residues 98 to 99 (IS) and Arg-108.

Belongs to the type-II 3-dehydroquinase family. Homododecamer.

The enzyme catalyses 3-dehydroquinate = 3-dehydroshikimate + H2O. The protein operates within metabolic intermediate biosynthesis; chorismate biosynthesis; chorismate from D-erythrose 4-phosphate and phosphoenolpyruvate: step 3/7. Its function is as follows. Catalyzes a trans-dehydration via an enolate intermediate. The chain is 3-dehydroquinate dehydratase from Thermotoga petrophila (strain ATCC BAA-488 / DSM 13995 / JCM 10881 / RKU-1).